A 489-amino-acid chain; its full sequence is Blue-light-activated histidine kinase (489 aa).

The PAS domain occupies 19-93 (ATDPFRAAVE…AIKSAIAAEK (75 aa)). Cys69 carries the post-translational modification S-4a-FMN cysteine. PAC domains lie at 93 to 147 (KPID…ELEK) and 232 to 281 (YSIE…NKAL). Positions 259–341 (NPLVLGIVQD…LLKENWAGAT (83 aa)) are HWE histidine kinase domain. Residue His288 is modified to Phosphohistidine; by autocatalysis.

Post-translationally, FMN binds covalently to cysteine after exposure to blue light and this bond is spontaneously broken in the dark.

It catalyses the reaction ATP + protein L-histidine = ADP + protein N-phospho-L-histidine.. In terms of biological role, photosensitive kinase that is involved in increased bacterial virulence upon exposure to light. Once ejected from an infected animal host, sunlight acts as an environmental signal that increases the virulence of the bacterium, preparing it for infection of the next host. This photoreceptor protein is directly related to the bacterium's survival and replication within host macrophages. The protein is Blue-light-activated histidine kinase of Brucella ovis (strain ATCC 25840 / 63/290 / NCTC 10512).